The chain runs to 355 residues: MQIILPDILQTWAYARLLNPHYDGAKLESSLWIHPLVAKLFDQKGQKAFQNDYTSLLASLMYSHQGKVPSRRCDMMNLFFVYDEYTDVVSPEIAHRLSKIVVDAMKNSDEMSPCGEHPIGDKAKEFWRLATTLLPATGSNSDVCKSRFINLTEEYLNAVTVEARDRNEGTIHSVKEYLTMRRATSGAGLMLALIEFELDLPKAVLEHKFVQALEEIYTRTRVSSGQANHNLITVVMHENPGLSLQGAFDWLGSYAAGVVECFQTNVRNLPSFCDVEGPACESVDGTLQERVDKYISGLGQAVRAEDDWAFETTRYYGEDGPKVRETRVLVIRPVKRITRRHLLQSLEIKYSMVRG.

Belongs to the terpene synthase family.

The sequence is that of Sesquiterpene synthase-like protein Agr11 from Cyclocybe aegerita (Black poplar mushroom).